The chain runs to 161 residues: MTKLKIKTDKPLTTAVLTSKKLTVKAPREKIDSASKFYATGKRKNAIARVWLKVGKGKIVVNKKTIDQYFSSETYVKTILQPFVLTKTIDQYDVICTVRGGGISGQKGAILHGISKALDKSAPDFHAMLRKGGLLTRDSRVVERKKYGQRKARKKTQFSKR.

Belongs to the universal ribosomal protein uS9 family.

The chain is Small ribosomal subunit protein uS9 from Rickettsia canadensis (strain McKiel).